A 92-amino-acid chain; its full sequence is Bombyxin A-3 (92 aa).

The N-terminal stretch at 1 to 19 (MKILLAIALMLSTVMWVST) is a signal peptide. Residue Gln20 is modified to Pyrrolidone carboxylic acid. Intrachain disulfides connect Cys29-Cys79, Cys41-Cys92, and Cys78-Cys83. Positions 50–70 (SDAQYVSYGSAWLMPYSEGRG) are cleaved as a propeptide — c peptide like.

Belongs to the insulin family. In terms of assembly, heterodimer of a B chain and an A chain linked by two disulfide bonds.

It is found in the secreted. Brain peptide responsible for activation of prothoracic glands to produce ecdysone in insects. This Bombyx mori (Silk moth) protein is Bombyxin A-3 (BBXA3).